A 143-amino-acid polypeptide reads, in one-letter code: Large ribosomal subunit protein uL13 (143 aa).

This sequence belongs to the universal ribosomal protein uL13 family. In terms of assembly, part of the 50S ribosomal subunit.

Functionally, this protein is one of the early assembly proteins of the 50S ribosomal subunit, although it is not seen to bind rRNA by itself. It is important during the early stages of 50S assembly. The chain is Large ribosomal subunit protein uL13 from Symbiobacterium thermophilum (strain DSM 24528 / JCM 14929 / IAM 14863 / T).